A 274-amino-acid polypeptide reads, in one-letter code: Diaminopimelate epimerase (274 aa).

The substrate site is built by asparagine 11, glutamine 44, and asparagine 64. The active-site Proton donor is cysteine 73. Substrate contacts are provided by residues 74–75 (GN), asparagine 157, asparagine 190, and 208–209 (ER). Cysteine 217 functions as the Proton acceptor in the catalytic mechanism. 218 to 219 (GT) contributes to the substrate binding site.

The protein belongs to the diaminopimelate epimerase family. As to quaternary structure, homodimer.

The protein resides in the cytoplasm. The enzyme catalyses (2S,6S)-2,6-diaminopimelate = meso-2,6-diaminopimelate. Its pathway is amino-acid biosynthesis; L-lysine biosynthesis via DAP pathway; DL-2,6-diaminopimelate from LL-2,6-diaminopimelate: step 1/1. In terms of biological role, catalyzes the stereoinversion of LL-2,6-diaminopimelate (L,L-DAP) to meso-diaminopimelate (meso-DAP), a precursor of L-lysine and an essential component of the bacterial peptidoglycan. This is Diaminopimelate epimerase from Blochmanniella pennsylvanica (strain BPEN).